The primary structure comprises 235 residues: Phosphoribosylformylglycinamidine synthase subunit PurQ (235 aa).

The region spanning 3-234 (FGVLVFPGSN…LNSLMAQGVT (232 aa)) is the Glutamine amidotransferase type-1 domain. The active-site Nucleophile is the Cys86. Residues His203 and Glu205 contribute to the active site.

As to quaternary structure, part of the FGAM synthase complex composed of 1 PurL, 1 PurQ and 2 PurS subunits.

The protein resides in the cytoplasm. It carries out the reaction N(2)-formyl-N(1)-(5-phospho-beta-D-ribosyl)glycinamide + L-glutamine + ATP + H2O = 2-formamido-N(1)-(5-O-phospho-beta-D-ribosyl)acetamidine + L-glutamate + ADP + phosphate + H(+). The catalysed reaction is L-glutamine + H2O = L-glutamate + NH4(+). It participates in purine metabolism; IMP biosynthesis via de novo pathway; 5-amino-1-(5-phospho-D-ribosyl)imidazole from N(2)-formyl-N(1)-(5-phospho-D-ribosyl)glycinamide: step 1/2. Its function is as follows. Part of the phosphoribosylformylglycinamidine synthase complex involved in the purines biosynthetic pathway. Catalyzes the ATP-dependent conversion of formylglycinamide ribonucleotide (FGAR) and glutamine to yield formylglycinamidine ribonucleotide (FGAM) and glutamate. The FGAM synthase complex is composed of three subunits. PurQ produces an ammonia molecule by converting glutamine to glutamate. PurL transfers the ammonia molecule to FGAR to form FGAM in an ATP-dependent manner. PurS interacts with PurQ and PurL and is thought to assist in the transfer of the ammonia molecule from PurQ to PurL. This is Phosphoribosylformylglycinamidine synthase subunit PurQ from Acaryochloris marina (strain MBIC 11017).